Here is a 203-residue protein sequence, read N- to C-terminus: LexA repressor 2 (203 aa).

A DNA-binding region (H-T-H motif) is located at residues 28–48 (MREIARHLNVNGTLGVAKHLE). Residues Ser-122 and Lys-159 each act as for autocatalytic cleavage activity in the active site.

The protein belongs to the peptidase S24 family. Homodimer.

It carries out the reaction Hydrolysis of Ala-|-Gly bond in repressor LexA.. In terms of biological role, represses a number of genes involved in the response to DNA damage (SOS response), including recA and lexA. In the presence of single-stranded DNA, RecA interacts with LexA causing an autocatalytic cleavage which disrupts the DNA-binding part of LexA, leading to derepression of the SOS regulon and eventually DNA repair. This is LexA repressor 2 from Geobacter sulfurreducens (strain ATCC 51573 / DSM 12127 / PCA).